Reading from the N-terminus, the 425-residue chain is MMPSESGAERRDRAAAQVGTAAATAVATAAPAGGGPDPEALSAFPGRHLSGLSWPQVKRLDALLSEPIPIHGRGNFPTLSVQPRQIVQVVRSTLEEQGLHVHSVRLHGSAASHVLHPESGLGYKDLDLVFRVDLRSEASFQLTKAVVLACLLDFLPAGVSRAKITPLTLKEAYVQKLVKVCTDSDRWSLISLSNKSGKNVELKFVDSVRRQFEFSIDSFQIILDSLLLFGQCSSTPMSEAFHPTVTGESLYGDFTEALEHLRHRVIATRSPEEIRGGGLLKYCHLLVRGFRPRPSTDVRALQRYMCSRFFIDFPDLVEQRRTLERYLEAHFGGADAARRYACLVTLHRVVNESTVCLMNHERRQTLDLIAALALQALAEQGPAATAALAWRPPGTDGVVPATVNYYVTPVQPLLAHAYPTWLPCN.

The interval methionine 1 to serine 42 is disordered. Over residues alanine 15–proline 31 the composition is skewed to low complexity.

The protein belongs to the TENT family.

It is found in the cytoplasm. Its subcellular location is the nucleus. The catalysed reaction is RNA(n) + ATP = RNA(n)-3'-adenine ribonucleotide + diphosphate. Catalyzes the transfer of one adenosine molecule from an ATP to an mRNA poly(A) tail bearing a 3'-OH terminal group in an ATP hydrolysis-dependent manner. May be involved in maintaining the translation efficiency of at least some genes through preventing degradation of their mRNAs. Prefers RNA molecules that are adenosine-rich close to 3'-end. In addition, may inhibit cell proliferation and cell cycle progression through ubiquitination of beta-catenin/CTNNB1. This chain is Terminal nucleotidyltransferase 5B, found in Homo sapiens (Human).